Reading from the N-terminus, the 445-residue chain is tRNA-2-methylthio-N(6)-dimethylallyladenosine synthase (445 aa).

The region spanning 3–124 is the MTTase N-terminal domain; it reads KKLYIKTYGC…LPELISKVVR (122 aa). Residues Cys12, Cys48, Cys87, Cys162, Cys166, and Cys169 each coordinate [4Fe-4S] cluster. The 233-residue stretch at 148–380 folds into the Radical SAM core domain; the sequence is YPQGTSAFIS…QQELMAQQLA (233 aa). Positions 383–445 constitute a TRAM domain; that stretch reads TSCVGSTMKV…SLNSLTGEIL (63 aa).

This sequence belongs to the methylthiotransferase family. MiaB subfamily. Monomer. It depends on [4Fe-4S] cluster as a cofactor.

It is found in the cytoplasm. It catalyses the reaction N(6)-dimethylallyladenosine(37) in tRNA + (sulfur carrier)-SH + AH2 + 2 S-adenosyl-L-methionine = 2-methylsulfanyl-N(6)-dimethylallyladenosine(37) in tRNA + (sulfur carrier)-H + 5'-deoxyadenosine + L-methionine + A + S-adenosyl-L-homocysteine + 2 H(+). Its function is as follows. Catalyzes the methylthiolation of N6-(dimethylallyl)adenosine (i(6)A), leading to the formation of 2-methylthio-N6-(dimethylallyl)adenosine (ms(2)i(6)A) at position 37 in tRNAs that read codons beginning with uridine. The polypeptide is tRNA-2-methylthio-N(6)-dimethylallyladenosine synthase (Rickettsia rickettsii (strain Iowa)).